The sequence spans 391 residues: uncharacterized protein (391 aa).

Residues 4–24 (FALIVGIVALAIFSFLYIQLY) form a helical membrane-spanning segment.

The protein localises to the membrane. This is an uncharacterized protein from Haemophilus influenzae (strain ATCC 51907 / DSM 11121 / KW20 / Rd).